Here is a 208-residue protein sequence, read N- to C-terminus: Guanylate kinase (208 aa).

In terms of domain architecture, Guanylate kinase-like spans 5 to 184 (GLLIVFSGPS…AAERVKCVIE (180 aa)). ATP is bound at residue 12–19 (GPSGVGKG).

Belongs to the guanylate kinase family.

It is found in the cytoplasm. It carries out the reaction GMP + ATP = GDP + ADP. Functionally, essential for recycling GMP and indirectly, cGMP. This chain is Guanylate kinase, found in Streptococcus pneumoniae (strain ATCC BAA-255 / R6).